Here is a 314-residue protein sequence, read N- to C-terminus: Deoxymugineic acid synthase 1-B (314 aa).

The segment at 1-22 (MGAGDKTAAGMPRIGMGTAVQG) is disordered. D44 is a binding site for NADP(+). Y49 serves as the catalytic Proton donor. H112 serves as a coordination point for substrate. NADP(+) contacts are provided by residues 158-159 (AN), Q180, 258-266 (FDEARMREN), and 273-281 (ELTEEERRR).

It belongs to the aldo/keto reductase family. In terms of tissue distribution, mostly expressed in root tissues, observed in mesocotyl and embryonic roots, seedling roots, crown and seedling leafes, mature bracts, anthers, pistil, caryopsis and embryos.

It carries out the reaction 2'-deoxymugineate + NAD(+) = 3''-deamino-3''-oxonicotianamine + NADH + H(+). The catalysed reaction is 2'-deoxymugineate + NADP(+) = 3''-deamino-3''-oxonicotianamine + NADPH + H(+). It functions in the pathway siderophore biosynthesis. In terms of biological role, catalyzes the reduction of a 3''-keto intermediate during the biosynthesis of 2'-deoxymugineic acid (DMA) from L-Met. Involved in the formation of phytosiderophores (MAs) belonging to the mugineic acid family and required to acquire iron. The polypeptide is Deoxymugineic acid synthase 1-B (Triticum aestivum (Wheat)).